A 158-amino-acid polypeptide reads, in one-letter code: MSIALFPGSFDPLTNGHLDIIERASLMFDKVVVGVGYNTGKKALFTPEEKLALISEVVSDLPNVEVAIMHGLTVQFMAEIGARFIVRGLRNSKDFEYERDIAGVNSALADVETILLLAKPENQNISSSMVKEIGSMGADNMAKFVPKVVVDALKERLN.

Ser9 is a binding site for substrate. ATP is bound by residues 9 to 10 (SF) and His17. Substrate-binding residues include Lys41, Thr73, and Arg87. ATP-binding positions include 88–90 (GLR), Glu98, and 122–128 (NQNISSS).

The protein belongs to the bacterial CoaD family. In terms of assembly, homohexamer. Mg(2+) serves as cofactor.

The protein resides in the cytoplasm. The catalysed reaction is (R)-4'-phosphopantetheine + ATP + H(+) = 3'-dephospho-CoA + diphosphate. It functions in the pathway cofactor biosynthesis; coenzyme A biosynthesis; CoA from (R)-pantothenate: step 4/5. Its function is as follows. Reversibly transfers an adenylyl group from ATP to 4'-phosphopantetheine, yielding dephospho-CoA (dPCoA) and pyrophosphate. In Leuconostoc citreum (strain KM20), this protein is Phosphopantetheine adenylyltransferase.